Here is a 40-residue protein sequence, read N- to C-terminus: U4-ctenitoxin-Co1c (40 aa).

4 disulfide bridges follow: Cys3-Cys20, Cys10-Cys26, Cys19-Cys40, and Cys28-Cys38.

As to expression, expressed by the venom gland.

It is found in the secreted. Its function is as follows. Not toxic to mice by intracerebroventricular injection. In Ctenus ornatus (Brazilian spider), this protein is U4-ctenitoxin-Co1c.